The following is an 87-amino-acid chain: UPF0250 protein BCc_307 (87 aa).

It belongs to the UPF0250 family.

The protein is UPF0250 protein BCc_307 of Buchnera aphidicola subsp. Cinara cedri (strain Cc).